A 66-amino-acid polypeptide reads, in one-letter code: Nigrocin-2ISb (66 aa).

An N-terminal signal peptide occupies residues Met1–Cys22. A propeptide spans Gln23–Ile43 (removed in mature form). The cysteines at positions 60 and 66 are disulfide-linked.

In terms of tissue distribution, expressed by the skin glands.

It localises to the secreted. Functionally, has antimicrobial activity against Gram-negative bacterium E.coli ATCC 8739 (MIC=50 ug), against Gram positive bacteria S.aureus ATCC 6538 (MIC=3.1 ug), methicillin-resistant S.aureus ATCC 43300 (MIC=12.5 ug), B.subtilis ATCC 6633 (MIC=12.5 ug) and against fungus C.albicans ATCC 90028 (MIC=50 ug). The protein is Nigrocin-2ISb of Odorrana ishikawae (Ishikawa's frog).